A 415-amino-acid chain; its full sequence is MIDRKLLLQDFDKVALSLKKRNNAMDDELERLREVITHYKKRLIELEGLQAFQNKVSKEFGIKMAQKVDTSDLKKELENNKIKLNELSKSVGELEQQIDLKLSIIPNLVDEKTPLGTNEEDNIEIKKILTPRVFTFKPKEHFELAQQNGWIDFESGVKLAKSRFSVIRGFGAKIYRALIHLMLDFNEKNGFEIIYTPALVNEKMLFGTGQLPKFKEDVFKIENENLYLIPTAEVTLTNLYNDTIISVENLPIKMTAHTPCFRSEAGSAGKDTRGMIRQHQFDKVELVAITHPKESDVMQEHMLESASEILKALELPHRFVQLCSGDLGFSASNTIDIEVWLPGQNCYREISSVSNTRDFQARRAKIRFKENQKNQLAHTLNGSSLAVGRTMVALMENHQQADGSIHIPKALEKYL.

231-233 (TAE) serves as a coordination point for L-serine. An ATP-binding site is contributed by 262 to 264 (RSE). Glu285 serves as a coordination point for L-serine. 349-352 (EISS) serves as a coordination point for ATP. Position 383 (Ser383) interacts with L-serine.

The protein belongs to the class-II aminoacyl-tRNA synthetase family. Type-1 seryl-tRNA synthetase subfamily. As to quaternary structure, homodimer. The tRNA molecule binds across the dimer.

The protein resides in the cytoplasm. It carries out the reaction tRNA(Ser) + L-serine + ATP = L-seryl-tRNA(Ser) + AMP + diphosphate + H(+). The catalysed reaction is tRNA(Sec) + L-serine + ATP = L-seryl-tRNA(Sec) + AMP + diphosphate + H(+). Its pathway is aminoacyl-tRNA biosynthesis; selenocysteinyl-tRNA(Sec) biosynthesis; L-seryl-tRNA(Sec) from L-serine and tRNA(Sec): step 1/1. Functionally, catalyzes the attachment of serine to tRNA(Ser). Is also able to aminoacylate tRNA(Sec) with serine, to form the misacylated tRNA L-seryl-tRNA(Sec), which will be further converted into selenocysteinyl-tRNA(Sec). The chain is Serine--tRNA ligase from Helicobacter pylori (strain ATCC 700392 / 26695) (Campylobacter pylori).